Consider the following 261-residue polypeptide: Expansin-B2 (261 aa).

Positions 1 to 24 are cleaved as a signal peptide; it reads MAGASAKVVAMLLSVLATYGFAAG. The Expansin-like EG45 domain maps to 51–157; it reads GGACGFKNTN…RRVPCYHRGL (107 aa). Intrachain disulfides connect Cys-54-Cys-82, Cys-85-Cys-152, and Cys-90-Cys-96. Residues 170–256 enclose the Expansin-like CBD domain; sequence VYLAVLVEFA…NWRANTNYGS (87 aa).

This sequence belongs to the expansin family. Expansin B subfamily. In terms of tissue distribution, expressed in roots.

The protein localises to the secreted. The protein resides in the cell wall. It localises to the membrane. Functionally, may cause loosening and extension of plant cell walls by disrupting non-covalent bonding between cellulose microfibrils and matrix glucans. No enzymatic activity has been found. May be required for rapid internodal elongation in deepwater rice during submergence. This chain is Expansin-B2 (EXPB2), found in Oryza sativa subsp. japonica (Rice).